The primary structure comprises 226 residues: Glutathione S-transferase kappa 1 (226 aa).

Glutathione is bound by residues 15–17 (SPY), Asn53, and 199–200 (SD).

It belongs to the GST superfamily. Kappa family.

The enzyme catalyses RX + glutathione = an S-substituted glutathione + a halide anion + H(+). This chain is Glutathione S-transferase kappa 1 (gstk-1), found in Caenorhabditis elegans.